The following is a 122-amino-acid chain: Large ribosomal subunit protein bL12 (122 aa).

This sequence belongs to the bacterial ribosomal protein bL12 family. As to quaternary structure, homodimer. Part of the ribosomal stalk of the 50S ribosomal subunit. Forms a multimeric L10(L12)X complex, where L10 forms an elongated spine to which 2 to 4 L12 dimers bind in a sequential fashion. Binds GTP-bound translation factors.

Forms part of the ribosomal stalk which helps the ribosome interact with GTP-bound translation factors. Is thus essential for accurate translation. In Azotobacter vinelandii (strain DJ / ATCC BAA-1303), this protein is Large ribosomal subunit protein bL12.